The primary structure comprises 747 residues: Potassium transporter 20 (747 aa).

The Cytoplasmic portion of the chain corresponds to 1 to 47; sequence MSVQEDDDAAGPEVDRLRRHDSFYGDAEKVSNDKSHGTGENWARTLQ. Residues 48–68 form a helical membrane-spanning segment; sequence LAFQSIGVVYGDVGTSPLYVY. Topologically, residues 69-84 are extracellular; that stretch reads SSTFPDGVKHPDDLVG. Residues 85 to 105 form a helical membrane-spanning segment; the sequence is VLSLMLYTLILIPMVKYVFIV. Residues 106–171 lie on the Cytoplasmic side of the membrane; the sequence is LYANDNGDGG…QKLESSNAAK (66 aa). A helical membrane pass occupies residues 172-192; it reads IALFTITILGTSMVMGDGTLT. Residues 193–209 lie on the Extracellular side of the membrane; it reads PAISVLSAVSGIREKAP. Residues 210–230 traverse the membrane as a helical segment; it reads SLTQLQVVWISVPILIVLFSV. Residues 231-237 are Cytoplasmic-facing; that stretch reads QRFGTDK. Residues 238-258 traverse the membrane as a helical segment; it reads VGYSFAPVISVWFVLIAGIGA. Residues 259–288 are Extracellular-facing; the sequence is YNLAVHEITILRAFNPMYIIDYFRRNGKEA. Residues 289 to 309 form a helical membrane-spanning segment; sequence WVSLGGAVLCITGTEAMFADL. Over 310–318 the chain is Cytoplasmic; the sequence is GHFNIRAIQ. A helical membrane pass occupies residues 319–339; sequence LSFTCVLFPSVALCYMGQAAY. Residues 340 to 353 lie on the Extracellular side of the membrane; sequence LRKFPEDVGDTFYK. The chain crosses the membrane as a helical span at residues 354-374; sequence SLPAPLFWPVFVVAIMAAIIA. Over 375–410 the chain is Cytoplasmic; that stretch reads SQAMLSGAFAILSKALPLGCFPRVEVVHTSNKYEGQ. The helical transmembrane segment at 411 to 431 threads the bilayer; sequence VYIPEVNFLIGVASVAITVAF. The Extracellular segment spans residues 432–442; it reads QTTANIGNAYG. A helical transmembrane segment spans residues 443–463; sequence ICVVMVFSITTHLMTVVMLLI. Residues 464 to 469 are Cytoplasmic-facing; it reads WKVRLP. Residues 470 to 490 form a helical membrane-spanning segment; it reads FIAAFYVVFTFTEFLYLSSIL. The Extracellular portion of the chain corresponds to 491–496; the sequence is SKFAEG. The chain crosses the membrane as a helical span at residues 497–517; that stretch reads GYLPFCFSLVLMALMATWHYV. Over 518–747 the chain is Cytoplasmic; that stretch reads HVKRYWYELD…LLKVGITYEI (230 aa).

This sequence belongs to the HAK/KUP transporter (TC 2.A.72.3) family.

Its subcellular location is the membrane. Functionally, high-affinity potassium transporter. The polypeptide is Potassium transporter 20 (HAK20) (Oryza sativa subsp. japonica (Rice)).